The primary structure comprises 61 residues: Large ribosomal subunit protein bL28 (61 aa).

The tract at residues 1-26 (MAKDYVTGKRTHFGNTRSHALNHSRR) is disordered.

This sequence belongs to the bacterial ribosomal protein bL28 family.

The polypeptide is Large ribosomal subunit protein bL28 (Lactiplantibacillus plantarum (strain ATCC BAA-793 / NCIMB 8826 / WCFS1) (Lactobacillus plantarum)).